A 316-amino-acid chain; its full sequence is Serpentine receptor class gamma-8 (316 aa).

Transmembrane regions (helical) follow at residues 28–48 (FVQVAYLAPAVFLYSRILYVV), 60–80 (PFFMVYSMVGLILVLLDIFIT), 106–126 (LYYPLLNYLHCAQPFIQIFLT), 147–167 (FSRILILNLIAPFFFIWNTII), 186–206 (IIPWASMSLFLFIIRSAVVMI), 235–255 (ACAANSICFLVPAVFEAMKVL), and 267–287 (LVQPFAWDVLNVGSPLVMIFA).

It belongs to the nematode receptor-like protein srg family.

Its subcellular location is the membrane. This chain is Serpentine receptor class gamma-8 (srg-8), found in Caenorhabditis elegans.